The sequence spans 441 residues: Protein arginine methyltransferase NDUFAF7, mitochondrial (441 aa).

A mitochondrion-targeting transit peptide spans 1-46 (MSVLLRSGLGPLCAVARAAIPFIWRGKYFSSGNEPAENPVTPMLRH).

The protein belongs to the NDUFAF7 family. As to quaternary structure, interacts with NDUFS2.

Its subcellular location is the mitochondrion. The enzyme catalyses L-arginyl-[protein] + 2 S-adenosyl-L-methionine = N(omega),N(omega)'-dimethyl-L-arginyl-[protein] + 2 S-adenosyl-L-homocysteine + 2 H(+). Arginine methyltransferase involved in the assembly or stability of mitochondrial NADH:ubiquinone oxidoreductase complex (complex I). Acts by mediating symmetric dimethylation of 'Arg-118' of NDUFS2 after it assembles into the complex I, stabilizing the early intermediate complex. The protein is Protein arginine methyltransferase NDUFAF7, mitochondrial of Homo sapiens (Human).